Here is a 548-residue protein sequence, read N- to C-terminus: Sesquiterpene synthase 12 (548 aa).

Residues D299, D303, D444, and E452 each contribute to the Mg(2+) site. Residues 299 to 303 (DDTFD) carry the DDXXD motif motif.

The protein belongs to the terpene synthase family. Tpsa subfamily. Requires Mg(2+) as cofactor. The cofactor is Mn(2+). In terms of tissue distribution, mostly expressed in leaves, to a lower extent in stems, trichomes, flowers and roots and, at low levels, in fruits.

It carries out the reaction (2E,6E)-farnesyl diphosphate = alpha-humulene + diphosphate. It catalyses the reaction (2E,6E)-farnesyl diphosphate = (-)-(E)-beta-caryophyllene + diphosphate. The enzyme catalyses (2Z,6Z)-farnesyl diphosphate = beta-bisabolene + diphosphate. The catalysed reaction is (2E)-geranyl diphosphate = terpinolene + diphosphate. It carries out the reaction (2E)-geranyl diphosphate = limonene + diphosphate. It catalyses the reaction (2E)-geranyl diphosphate = beta-myrcene + diphosphate. The enzyme catalyses (2E)-geranyl diphosphate = (E)-beta-ocimene + diphosphate. The catalysed reaction is (2Z,6Z)-farnesyl diphosphate = gamma-curcumene + diphosphate. It carries out the reaction (2Z,6Z)-farnesyl diphosphate = (Z)-gamma-bisabolene + diphosphate. It functions in the pathway secondary metabolite biosynthesis; terpenoid biosynthesis. Sesquiterpene synthase involved in the biosynthesis of volatile compounds. Mediates the conversion of (2E,6E)-farnesyl diphosphate (FPP) into (1E,4E,8E)-alpha-humulene and (-)-(E)-beta-caryophyllene, and of (2Z,6Z)-farnesyl diphosphate ((ZZ)-FPP) into beta-bisabolene, gamma-curcumene and (Z)-gamma-bisabolene. Can act with a low efficiency as a monoterpene synthase with geranyl diphosphate (GPP) as substrate, thus producing beta-myrcene, (E)-beta-ocimene, limonene and terpinolene. The polypeptide is Sesquiterpene synthase 12 (Solanum lycopersicum (Tomato)).